Consider the following 212-residue polypeptide: RNA chaperone ProQ (212 aa).

Residues 107–153 (QDKAKAKRVAQAKSANPAAKTAKKPVKKPVAKRPKQTQSSKPAKEPV) are disordered. Low complexity predominate over residues 117–126 (QAKSANPAAK). Over residues 127-141 (TAKKPVKKPVAKRPK) the composition is skewed to basic residues.

This sequence belongs to the ProQ family.

The protein localises to the cytoplasm. In terms of biological role, RNA chaperone with significant RNA binding, RNA strand exchange and RNA duplexing activities. This chain is RNA chaperone ProQ, found in Shewanella halifaxensis (strain HAW-EB4).